Here is a 400-residue protein sequence, read N- to C-terminus: MGKVRHSPKEGYFGEFGGRYSPEILHDALAELETTYKKLKKNKHFKKELEYYRKNYIGRPSPLTYAERLTKVWDGARIWLKREDLNHTGAHKINNTIGQVLIAKAMGKTRIIAETGAGQHGVATATVGAMFQMETVVYMGEEDLRRQELNAIRMRMMGAKVVGVSSGTATLKDATSEAMRDWALNVSNTHYIVGSSIGPHPFPTIVRDFQSVIGIESRKQFKKVNGKLPNAVIACVGGGSNSIGMFYGFLRDKKVKLFGVEAGGYSTEPGHHSATIQFGRTGFLHGTKTLVIQDEFGQIVPAHSVSAGLDYPGVGPEHAYFHKSGRVTYVNVDDDGALDAFLEICQIEGIIPALETAHAFRFAKDLAKSMGKKEDILICLSGRGDKDVAEVARLRKGEFS.

Lys-92 is subject to N6-(pyridoxal phosphate)lysine.

It belongs to the TrpB family. In terms of assembly, tetramer of two alpha and two beta chains. Requires pyridoxal 5'-phosphate as cofactor.

It catalyses the reaction (1S,2R)-1-C-(indol-3-yl)glycerol 3-phosphate + L-serine = D-glyceraldehyde 3-phosphate + L-tryptophan + H2O. It participates in amino-acid biosynthesis; L-tryptophan biosynthesis; L-tryptophan from chorismate: step 5/5. Its function is as follows. The beta subunit is responsible for the synthesis of L-tryptophan from indole and L-serine. The chain is Tryptophan synthase beta chain from Leptospira borgpetersenii serovar Hardjo-bovis (strain JB197).